A 96-amino-acid chain; its full sequence is uncharacterized protein (96 aa).

This is an uncharacterized protein from Sulfolobus islandicus filamentous virus (isolate Iceland/Hveragerdi) (SIFV).